Consider the following 449-residue polypeptide: POU domain, class 5, transcription factor 1.1 (449 aa).

Disordered stretches follow at residues 79-125 and 170-233; these read ENNQ…SPPN and YPTP…PSES. Over residues 97 to 110 the composition is skewed to basic and acidic residues; that stretch reads SRIKVKEEVVHETD. Residues 170-180 are compositionally biased toward polar residues; it reads YPTPANQSPNT. Over residues 187–199 the composition is skewed to low complexity; it reads SSMESSRCSSTNS. Positions 224 to 233 are enriched in acidic residues; sequence DNEEEVPSES. Positions 227 to 301 constitute a POU-specific domain; that stretch reads EEVPSESEME…FLERWVVEAE (75 aa). The segment at residues 321–380 is a DNA-binding region (homeobox); that stretch reads KRKRRTNIENIVKGTLESYFMKCPKPGAQEMVQIAKELNMDKDVVRVWFCNRRQKGKRQG.

It belongs to the POU transcription factor family. Class-5 subfamily. As to quaternary structure, interacts with components of the transcription complex that assembles on the vent2-B gene, including vent2 (via C-terminus), smad1 and smad4. Forms a repression complex on the promoters of the gsc and mix2 genes via interactions with the nodal/activin signaling pathway transducers foxh1/fast1, gtf2ird1/wbscr11 and smad2. Forms a repression complex on the promoters of the nodal/nr1 and siamois genes with the maternal factors tcf7l1/tcf3 and vegt. In terms of tissue distribution, highly enriched within the animal half of developing embryos within ectodermal and mesodermal regions. Expressed in the neuroectoderm at the early neurula stage, with expression initially extending to the future hindbrain/midbrain boundary, but later shifting toward the posterior pole where it persists within the tip of the tail in hatching embryos. Expressed at very low levels in the adult kidney.

Its subcellular location is the nucleus. In terms of biological role, transcription factor that binds to the octamer motif (5'-ATTTGCAT-3'). Activates transcription when directly bound to the octamer DNA sequence, but can form repression complexes with other proteins at the promoter site to inhibit transcription. Binds to the promoter of the vent2-B gene to activate transcription when in the presence of other BMP signaling factors also bound to the promoter. Inhibits the competence of ectodermal cells to respond to BMP during embryogenesis thereby inhibiting epidermal differentiation and promoting neural induction. Antagonizes the activity of nodal/activin signaling by forming a transcriptional repression complex on the gsc and mix2 gene promoters to inhibit their transcription, and thus maintain the undifferentiated state of embryonic cells to prevent them from differentiating prematurely. Acts maternally to inhibit vegt and beta-catenin-activated gene transcription by forming a transcriptional repression complex on the nodal/nr1 and siamois promoters to inhibit their transcription. This chain is POU domain, class 5, transcription factor 1.1 (pou5f1.1), found in Xenopus laevis (African clawed frog).